The sequence spans 255 residues: uncharacterized protein (255 aa).

Residues 1–18 (MRILIILSIILCSLFTKA) form the signal peptide.

It belongs to the MlaA family.

This is an uncharacterized protein from Rickettsia bellii (strain RML369-C).